The primary structure comprises 150 residues: Protein adenylyltransferase MntA (150 aa).

The GSX(10)DXD motif signature appears at Gly-32–Asp-46. Residues Asp-44 and Asp-46 contribute to the active site. The Mg(2+) site is built by Asp-44, Asp-46, and Asp-86.

The protein belongs to the MntA antitoxin family. In terms of assembly, forms a complex with HepT, probably MntA(1):HepT(2) in vivo; can only be purified when both 'Arg-102' and 'Tyr-109' (or 'His-107' and 'Tyr-109') of HepThave been mutated. The fully di-AMPylated HepT homodimer is not found in a complex with MntA. Requires Mg(2+) as cofactor.

The enzyme catalyses L-tyrosyl-[protein] + ATP = O-(5'-adenylyl)-L-tyrosyl-[protein] + diphosphate. It carries out the reaction O-(5'-adenylyl)-L-tyrosyl-[protein] + ATP = O-[5'-(adenylyl-(5'-&gt;3')-adenylyl)]-L-tyrosyl-[protein] + diphosphate. Functionally, antitoxin component of a type VII toxin-antitoxin (TA) system. Upon cloning in E.coli neutralizes the effect of cognate toxin HepT. Neutralization is mostly due to di-AMPylation of toxin by this enzyme. Successively di-AMPylates HepT on 'Tyr-109'. In vitro will use ATP, dATP, GTP, dGTP, TTP or UTP to generate a mono-modified protein, but requires a purine nucleotide for the second modification reaction (ATP, dATP or GTP). The chain is Protein adenylyltransferase MntA from Aphanizomenon flos-aquae (strain 2012/KM1/D3).